The sequence spans 193 residues: MTVLSDRDIKRALEEGDIVVKPLEEEYLEEALGPASLDLRLGNEFVVFKTLHKPCIDPTVDAGENTERIVIDEDEEFVINPGELVLAVTHEWIEINAPDITGVLHGRSSLGRLGIQAHVEAGYVDPGWRGRLTLELVNFNPMPVKLRPGMRVVQIVFHRLSSPAERTYAESSGKYHGDERPSPSKMHLDFCRG.

DCTP contacts are provided by residues 107–112, Asp125, 133–135, Gln154, and Tyr168; these read RSSLGR and TLE. Glu135 functions as the Proton donor/acceptor in the catalytic mechanism. Positions 169 to 193 are disordered; the sequence is AESSGKYHGDERPSPSKMHLDFCRG. Residues 173–193 are compositionally biased toward basic and acidic residues; sequence GKYHGDERPSPSKMHLDFCRG.

This sequence belongs to the dCTP deaminase family. In terms of assembly, homotrimer.

The catalysed reaction is dCTP + 2 H2O = dUMP + NH4(+) + diphosphate. It participates in pyrimidine metabolism; dUMP biosynthesis; dUMP from dCTP: step 1/1. Functionally, bifunctional enzyme that catalyzes both the deamination of dCTP to dUTP and the hydrolysis of dUTP to dUMP without releasing the toxic dUTP intermediate. The sequence is that of dCTP deaminase, dUMP-forming from Methanopyrus kandleri (strain AV19 / DSM 6324 / JCM 9639 / NBRC 100938).